We begin with the raw amino-acid sequence, 21 residues long: Helicopsin (21 aa).

The protein belongs to the CRISP family. In terms of processing, contains 8 disulfide bonds. Expressed by the salivary gland.

The protein resides in the secreted. Its function is as follows. Helicopsin exhibits robust neurotoxic activity as shown by immediate death (about 8 minutes) of mice due to respiratory paralysis. The sequence is that of Helicopsin from Helicops angulatus (South American water snake).